A 1117-amino-acid polypeptide reads, in one-letter code: RNA-directed RNA polymerase (1117 aa).

Over residues 1-17 (MTVSGRSSWQNGKTTNA) the composition is skewed to polar residues. The segment at 1-23 (MTVSGRSSWQNGKTTNAMRAGKL) is disordered.

The catalysed reaction is RNA(n) + a ribonucleoside 5'-triphosphate = RNA(n+1) + diphosphate. RNA-dependent RNA polymerase which replicates the viral genome. This Penicillium chrysogenum (Penicillium notatum) protein is RNA-directed RNA polymerase (p1).